Reading from the N-terminus, the 291-residue chain is Acetyl-coenzyme A carboxylase carboxyl transferase subunit beta (291 aa).

One can recognise a CoA carboxyltransferase N-terminal domain in the interval 23 to 291 (VWHKCPSCTA…PPDLPVEESV (269 aa)). Zn(2+)-binding residues include Cys-27, Cys-30, Cys-46, and Cys-49. The C4-type zinc-finger motif lies at 27–49 (CPSCTAVLYRVELERNLEVCPKC).

This sequence belongs to the AccD/PCCB family. As to quaternary structure, acetyl-CoA carboxylase is a heterohexamer composed of biotin carboxyl carrier protein (AccB), biotin carboxylase (AccC) and two subunits each of ACCase subunit alpha (AccA) and ACCase subunit beta (AccD). Requires Zn(2+) as cofactor.

It localises to the cytoplasm. It carries out the reaction N(6)-carboxybiotinyl-L-lysyl-[protein] + acetyl-CoA = N(6)-biotinyl-L-lysyl-[protein] + malonyl-CoA. It functions in the pathway lipid metabolism; malonyl-CoA biosynthesis; malonyl-CoA from acetyl-CoA: step 1/1. Functionally, component of the acetyl coenzyme A carboxylase (ACC) complex. Biotin carboxylase (BC) catalyzes the carboxylation of biotin on its carrier protein (BCCP) and then the CO(2) group is transferred by the transcarboxylase to acetyl-CoA to form malonyl-CoA. In Coxiella burnetii (strain RSA 331 / Henzerling II), this protein is Acetyl-coenzyme A carboxylase carboxyl transferase subunit beta.